Here is a 107-residue protein sequence, read N- to C-terminus: Ferredoxin 1 (107 aa).

4Fe-4S ferredoxin-type domains follow at residues 2–30 and 31–60; these read TFVV…YEGP and NFLV…SEDE. [3Fe-4S] cluster is bound by residues C9 and C17. Residues C21, C40, C43, and C46 each contribute to the [4Fe-4S] cluster site. C50 provides a ligand contact to [3Fe-4S] cluster.

[4Fe-4S] cluster serves as cofactor. The cofactor is [3Fe-4S] cluster.

Ferredoxins are iron-sulfur proteins that transfer electrons in a wide variety of metabolic reactions. The protein is Ferredoxin 1 (fdxA) of Pseudomonas aeruginosa (strain ATCC 15692 / DSM 22644 / CIP 104116 / JCM 14847 / LMG 12228 / 1C / PRS 101 / PAO1).